A 105-amino-acid chain; its full sequence is Heat shock protein HspQ (105 aa).

Belongs to the HspQ family.

It is found in the cytoplasm. Functionally, involved in the degradation of certain denaturated proteins, including DnaA, during heat shock stress. This is Heat shock protein HspQ from Salmonella choleraesuis (strain SC-B67).